The sequence spans 382 residues: Gap junction alpha-1 protein (382 aa).

Topologically, residues Gly2 to Lys23 are cytoplasmic. At Ser5 the chain carries Phosphoserine. Residues Val24–Ala44 form a helical membrane-spanning segment. Over Trp45 to Arg76 the chain is Extracellular. Cystine bridges form between Cys54-Cys192 and Cys187-Cys198. Residues Phe77 to Phe97 traverse the membrane as a helical segment. The Cytoplasmic segment spans residues Tyr98–Tyr155. Residue Lys144 forms a Glycyl lysine isopeptide (Lys-Gly) (interchain with G-Cter in SUMO) linkage. Residues Ile156 to Ile176 form a helical membrane-spanning segment. Residues Tyr177–Thr207 lie on the Extracellular side of the membrane. A helical membrane pass occupies residues Ile208–Leu228. Over Phe229–Ile382 the chain is Cytoplasmic. Lys237 participates in a covalent cross-link: Glycyl lysine isopeptide (Lys-Gly) (interchain with G-Cter in SUMO). Residues Ser244–Ile382 form an interaction with NOV region. Phosphotyrosine is present on Tyr247. 2 positions are modified to phosphoserine: Ser255 and Ser262. The segment at Lys264–Ile382 is interaction with UBQLN4. An S-nitrosocysteine modification is found at Cys271. Thr275 carries the phosphothreonine modification. Ser306 and Ser314 each carry phosphoserine. The segment covering Gln317–Ala332 has biased composition (polar residues). The interval Gln317–Ile382 is disordered. At Ser325 the chain carries Phosphoserine; by CK1. The residue at position 326 (Thr326) is a Phosphothreonine. Ser328 and Ser330 each carry phosphoserine; by CK1. Ser344 and Ser365 each carry phosphoserine. Residues Arg362–Arg374 are compositionally biased toward low complexity. Ser368 carries the phosphoserine; by PKC/PRKCG and PKC/PRKCD modification. Phosphoserine occurs at positions 369 and 373.

It belongs to the connexin family. Alpha-type (group II) subfamily. In terms of assembly, a connexon is composed of a hexamer of connexins. Interacts with SGSM3. Interacts with RIC1/CIP150. Interacts with CNST and CSNK1D. Interacts (via C-terminus) with TJP1. Interacts (via C-terminus) with SRC (via SH3 domain). Interacts (not ubiquitinated) with UBQLN4 (via UBA domain). Interacts with NOV. Interacts with TMEM65. Interacts with ANK3/ANKG and PKP2. Phosphorylation at Ser-325, Ser-328 and Ser-330 by CK1 modulates gap junction assembly. Phosphorylated at Ser-368 by PRKCG; phosphorylation induces disassembly of gap junction plaques and inhibition of gap junction activity. Phosphorylation at Ser-368 by PRKCD triggers its internalization into small vesicles leading to proteasome-mediated degradation. In terms of processing, sumoylated with SUMO1, SUMO2 and SUMO3, which may regulate the level of functional Cx43 gap junctions at the plasma membrane. May be desumoylated by SENP1 or SENP2. Post-translationally, S-nitrosylation at Cys-271 is enriched at the muscle endothelial gap junction in arteries, it augments channel permeability and may regulate of smooth muscle cell to endothelial cell communication. Acetylated in the developing cortex; leading to delocalization from the cell membrane.

The protein resides in the cell membrane. Its subcellular location is the cell junction. It localises to the gap junction. It is found in the endoplasmic reticulum. Functionally, gap junction protein that acts as a regulator of bladder capacity. A gap junction consists of a cluster of closely packed pairs of transmembrane channels, the connexons, through which materials of low MW diffuse from one cell to a neighboring cell. May play a critical role in the physiology of hearing by participating in the recycling of potassium to the cochlear endolymph. Negative regulator of bladder functional capacity: acts by enhancing intercellular electrical and chemical transmission, thus sensitizing bladder muscles to cholinergic neural stimuli and causing them to contract. May play a role in cell growth inhibition through the regulation of NOV expression and localization. Plays an essential role in gap junction communication in the ventricles. In Chlorocebus aethiops (Green monkey), this protein is Gap junction alpha-1 protein (GJA1).